The primary structure comprises 67 residues: DNA-directed RNA polymerase subunit omega (67 aa).

This sequence belongs to the RNA polymerase subunit omega family. In terms of assembly, the RNAP catalytic core consists of 2 alpha, 1 beta, 1 beta' and 1 omega subunit. When a sigma factor is associated with the core the holoenzyme is formed, which can initiate transcription.

The enzyme catalyses RNA(n) + a ribonucleoside 5'-triphosphate = RNA(n+1) + diphosphate. Its function is as follows. Promotes RNA polymerase assembly. Latches the N- and C-terminal regions of the beta' subunit thereby facilitating its interaction with the beta and alpha subunits. The polypeptide is DNA-directed RNA polymerase subunit omega (Acidovorax ebreus (strain TPSY) (Diaphorobacter sp. (strain TPSY))).